The primary structure comprises 360 residues: DNA replication and repair protein RecF (360 aa).

30-37 contacts ATP; the sequence is GHNGSGKT.

Belongs to the RecF family.

It localises to the cytoplasm. The RecF protein is involved in DNA metabolism; it is required for DNA replication and normal SOS inducibility. RecF binds preferentially to single-stranded, linear DNA. It also seems to bind ATP. The protein is DNA replication and repair protein RecF of Shewanella sediminis (strain HAW-EB3).